The sequence spans 665 residues: Succinate dehydrogenase [ubiquinone] flavoprotein subunit A, mitochondrial (665 aa).

The transit peptide at 1–45 directs the protein to the mitochondrion; that stretch reads MALLKVAPSRLLSRALQLASRVQNCTPTVTTARRNFHFTVYGRKD. 5 residues coordinate FAD: A72, A75, T94, K95, and S101. Tele-8alpha-FAD histidine is present on H102. 4 residues coordinate FAD: T103, G108, A224, and D278. Positions 299, 343, and 410 each coordinate oxaloacetate. R343 functions as the Proton acceptor in the catalytic mechanism. Residue E443 coordinates FAD. Residues R454 and A457 each contribute to the oxaloacetate site. FAD is bound by residues S459 and L460.

This sequence belongs to the FAD-dependent oxidoreductase 2 family. FRD/SDH subfamily. Component of complex II composed of four subunits: a flavoprotein (FP), an iron-sulfur protein (IP), and a cytochrome b composed of a large and a small subunit. FAD is required as a cofactor.

Its subcellular location is the mitochondrion inner membrane. It carries out the reaction a ubiquinone + succinate = a ubiquinol + fumarate. It catalyses the reaction (R)-malate + a quinone = enol-oxaloacetate + a quinol. The enzyme catalyses (S)-malate + a quinone = enol-oxaloacetate + a quinol. It participates in carbohydrate metabolism; tricarboxylic acid cycle; fumarate from succinate (eukaryal route): step 1/1. Enol-oxaloacetate inhibits the succinate dehydrogenase activity. In terms of biological role, flavoprotein (FP) subunit of succinate dehydrogenase (SDH) that is involved in complex II of the mitochondrial electron transport chain and is responsible for transferring electrons from succinate to ubiquinone (coenzyme Q). SDH also oxidizes malate to the non-canonical enol form of oxaloacetate, enol-oxaloacetate. Enol-oxaloacetate, which is a potent inhibitor of the succinate dehydrogenase activity, is further isomerized into keto-oxaloacetate. This Xenopus laevis (African clawed frog) protein is Succinate dehydrogenase [ubiquinone] flavoprotein subunit A, mitochondrial (sdha-a).